The primary structure comprises 472 residues: Serine/threonine-protein kinase sax-1 (472 aa).

One can recognise a Protein kinase domain in the interval 87–381 (FESLKVIGRG…LDEIKQCPFF (295 aa)). Residues 93–101 (IGRGAFGEV) and Lys116 each bind ATP. Asp210 functions as the Proton acceptor in the catalytic mechanism. The 71-residue stretch at 382–452 (RRIDWNHIRE…KRFDGLTQKM (71 aa)) folds into the AGC-kinase C-terminal domain.

This sequence belongs to the protein kinase superfamily. AGC Ser/Thr protein kinase family. It depends on Mg(2+) as a cofactor.

It localises to the cytoplasm. Its subcellular location is the nucleus. The catalysed reaction is L-seryl-[protein] + ATP = O-phospho-L-seryl-[protein] + ADP + H(+). It carries out the reaction L-threonyl-[protein] + ATP = O-phospho-L-threonyl-[protein] + ADP + H(+). Functionally, acts with sax-2 to restrict the growth of both primary and secondary neurites. Regulates mechanosensory tiling by controlling the termination point of sensory dendrites. The sequence is that of Serine/threonine-protein kinase sax-1 from Caenorhabditis briggsae.